A 518-amino-acid chain; its full sequence is Integrator complex subunit 14 (518 aa).

The region spanning 2–204 is the VWFA domain; the sequence is PTVVVMDVSL…KNVQSMFGKL (203 aa). Mg(2+)-binding residues include Ser-10, Ser-12, and Thr-86.

It belongs to the Integrator subunit 14 family. In terms of assembly, component of the Integrator complex, composed of core subunits INTS1, INTS2, INTS3, INTS4, INTS5, INTS6, INTS7, INTS8, INTS9/RC74, INTS10, INTS11/CPSF3L, INTS12, INTS13, INTS14 and INTS15. The core complex associates with protein phosphatase 2A subunits PPP2CA and PPP2R1A, to form the Integrator-PP2A (INTAC) complex. INTS14 is part of the tail subcomplex, composed of INTS10, INTS13, INTS14 and INTS15.

It is found in the nucleus. Component of the integrator complex, a multiprotein complex that terminates RNA polymerase II (Pol II) transcription in the promoter-proximal region of genes. The integrator complex provides a quality checkpoint during transcription elongation by driving premature transcription termination of transcripts that are unfavorably configured for transcriptional elongation: the complex terminates transcription by (1) catalyzing dephosphorylation of the C-terminal domain (CTD) of Pol II subunit POLR2A/RPB1 and SUPT5H/SPT5, (2) degrading the exiting nascent RNA transcript via endonuclease activity and (3) promoting the release of Pol II from bound DNA. The integrator complex is also involved in terminating the synthesis of non-coding Pol II transcripts, such as enhancer RNAs (eRNAs), small nuclear RNAs (snRNAs), telomerase RNAs and long non-coding RNAs (lncRNAs). Within the integrator complex, INTS14 is part of the integrator tail module that acts as a platform for the recruitment of transcription factors at promoters. In Xenopus tropicalis (Western clawed frog), this protein is Integrator complex subunit 14.